The sequence spans 345 residues: Phosphoribosylformylglycinamidine cyclo-ligase (345 aa).

It belongs to the AIR synthase family.

The protein localises to the cytoplasm. It carries out the reaction 2-formamido-N(1)-(5-O-phospho-beta-D-ribosyl)acetamidine + ATP = 5-amino-1-(5-phospho-beta-D-ribosyl)imidazole + ADP + phosphate + H(+). Its pathway is purine metabolism; IMP biosynthesis via de novo pathway; 5-amino-1-(5-phospho-D-ribosyl)imidazole from N(2)-formyl-N(1)-(5-phospho-D-ribosyl)glycinamide: step 2/2. The polypeptide is Phosphoribosylformylglycinamidine cyclo-ligase (Pseudoalteromonas atlantica (strain T6c / ATCC BAA-1087)).